The primary structure comprises 941 residues: Putative helicase 121R (941 aa).

The stretch at L285 to N323 forms a coiled coil. Positions D492 to L514 are disordered. The segment covering S498–V507 has biased composition (acidic residues). Residues E609–T791 form the SF3 helicase domain. Position 653 to 660 (G653 to S660) interacts with ATP.

It belongs to the IIV-6 184L family.

The sequence is that of Putative helicase 121R from Invertebrate iridescent virus 3 (IIV-3).